We begin with the raw amino-acid sequence, 317 residues long: HTH-type transcriptional regulator CfxR (317 aa).

The HTH lysR-type domain occupies 8-65; it reads LTLRQLQIFVTVARHASFVRAAEELHLTQPAVSMQVKQLESVVGMALFERVKGQLTLT. The H-T-H motif DNA-binding region spans 25–44; that stretch reads FVRAAEELHLTQPAVSMQVK.

This sequence belongs to the LysR transcriptional regulatory family.

In terms of biological role, trans-acting transcriptional regulator of RuBisCO genes (cfxLS) expression. In Cupriavidus necator (strain ATCC 17699 / DSM 428 / KCTC 22496 / NCIMB 10442 / H16 / Stanier 337) (Ralstonia eutropha), this protein is HTH-type transcriptional regulator CfxR (cfxR).